The following is a 156-amino-acid chain: Zinc finger SWIM domain-containing protein 7 homolog (156 aa).

Residues 82–120 form an SWIM-type zinc finger; it reads YMCLIQGDYCSCPSFNFSVLLKSDSVYCKHQISSILAEI.

The protein belongs to the SWS1 family.

It localises to the nucleus. Its function is as follows. May be involved in the homologous recombination repair (HRR) pathway of double-stranded DNA breaks arising during DNA replication or induced by DNA-damaging agents. The protein is Zinc finger SWIM domain-containing protein 7 homolog (zswim7) of Dictyostelium discoideum (Social amoeba).